Reading from the N-terminus, the 560-residue chain is Dihydroxy-acid dehydratase (560 aa).

[2Fe-2S] cluster is bound at residue Cys-50. Asp-82 is a Mg(2+) binding site. Residue Cys-123 coordinates [2Fe-2S] cluster. Residues Asp-124 and Lys-125 each coordinate Mg(2+). N6-carboxylysine is present on Lys-125. Cys-195 is a binding site for [2Fe-2S] cluster. Glu-447 serves as a coordination point for Mg(2+). Ser-473 functions as the Proton acceptor in the catalytic mechanism.

This sequence belongs to the IlvD/Edd family. Homodimer. Requires [2Fe-2S] cluster as cofactor. Mg(2+) serves as cofactor.

It carries out the reaction (2R)-2,3-dihydroxy-3-methylbutanoate = 3-methyl-2-oxobutanoate + H2O. The enzyme catalyses (2R,3R)-2,3-dihydroxy-3-methylpentanoate = (S)-3-methyl-2-oxopentanoate + H2O. It functions in the pathway amino-acid biosynthesis; L-isoleucine biosynthesis; L-isoleucine from 2-oxobutanoate: step 3/4. The protein operates within amino-acid biosynthesis; L-valine biosynthesis; L-valine from pyruvate: step 3/4. Functionally, functions in the biosynthesis of branched-chain amino acids. Catalyzes the dehydration of (2R,3R)-2,3-dihydroxy-3-methylpentanoate (2,3-dihydroxy-3-methylvalerate) into 2-oxo-3-methylpentanoate (2-oxo-3-methylvalerate) and of (2R)-2,3-dihydroxy-3-methylbutanoate (2,3-dihydroxyisovalerate) into 2-oxo-3-methylbutanoate (2-oxoisovalerate), the penultimate precursor to L-isoleucine and L-valine, respectively. This is Dihydroxy-acid dehydratase from Methylibium petroleiphilum (strain ATCC BAA-1232 / LMG 22953 / PM1).